The primary structure comprises 136 residues: MLQPKRTKFRKVHKGRNRGLAIGTDVSFGTYGLKAVGRGRLTARQIEAARRAMTRAVKRQGKIWIRVFPDKPITEKPLEVRMGKGKGNVEYWVALIQPGKVLYEMDGVPEEVAREAFQLAAAKLPIKTTFVTKTVM.

The protein belongs to the universal ribosomal protein uL16 family. As to quaternary structure, part of the 50S ribosomal subunit.

Functionally, binds 23S rRNA and is also seen to make contacts with the A and possibly P site tRNAs. This Proteus mirabilis (strain HI4320) protein is Large ribosomal subunit protein uL16.